The primary structure comprises 176 residues: Large ribosomal subunit protein uL10 (176 aa).

It belongs to the universal ribosomal protein uL10 family. As to quaternary structure, part of the ribosomal stalk of the 50S ribosomal subunit. The N-terminus interacts with L11 and the large rRNA to form the base of the stalk. The C-terminus forms an elongated spine to which L12 dimers bind in a sequential fashion forming a multimeric L10(L12)X complex.

Forms part of the ribosomal stalk, playing a central role in the interaction of the ribosome with GTP-bound translation factors. This is Large ribosomal subunit protein uL10 from Teredinibacter turnerae (strain ATCC 39867 / T7901).